Reading from the N-terminus, the 494-residue chain is uncharacterized protein (494 aa).

The protein belongs to the TPP enzyme family.

This is an uncharacterized protein from Methanocaldococcus jannaschii (strain ATCC 43067 / DSM 2661 / JAL-1 / JCM 10045 / NBRC 100440) (Methanococcus jannaschii).